An 884-amino-acid chain; its full sequence is E3 SUMO-protein ligase SIZ1 (884 aa).

The region spanning Leu-11–Leu-45 is the SAP domain. The tract at residues Leu-84–Pro-103 is disordered. A compositionally biased stretch (polar residues) spans Gly-88 to Leu-97. Residue Lys-100 forms a Glycyl lysine isopeptide (Lys-Gly) (interchain with G-Cter in SUMO) linkage. The segment at Lys-112 to Thr-168 adopts a PHD-type zinc-finger fold. The SP-RING-type zinc-finger motif lies at Ser-346–His-429. The Zn(2+) site is built by Cys-379, His-381, Cys-402, and Cys-405. Lys-488 participates in a covalent cross-link: Glycyl lysine isopeptide (Lys-Gly) (interchain with G-Cter in SUMO). Disordered stretches follow at residues Pro-753–Ser-778, Gly-792–Thr-824, and Asp-836–His-869. Polar residues-rich tracts occupy residues Ser-766–Ser-778 and Ala-803–Thr-824. Residues Ser-837–Ser-847 show a composition bias toward basic and acidic residues.

This sequence belongs to the PIAS family. In terms of assembly, interacts (via PHD domain) with SCE1, GTE3 and GTE5. In terms of processing, autosumoylated at Lys-100 and Lys-488. In terms of tissue distribution, ubiquitous.

It is found in the nucleus speckle. It participates in protein modification; protein sumoylation. Functionally, E3 SUMO protein ligase involved in regulation processes. Mediates SUMO/ attachment to PHR1, a MYB transcriptional activator controlling the phosphate deficiency responses. Functions as an upstream negative regulator of salicylic acid (SA) accumulation and subsequent SA-mediated systemic acquired resistance (SAR) signaling. Probably not involved in jasmonic acid (JA)-mediated defense response. Participates in abiotic stress-induced sumoylation. Controls heat shock-induced SUMO1 and SUMO2 conjugation and facilitates basal thermotolerance. Involved in freezing tolerance by mediating sumoylation of ICE1, a transcription activator of the cold signaling regulator CBF3/DREB1A. Acts as a positive regulator of drought stress tolerance. Acts as a floral repressor that promotes FLC expression by repressing FLD activity through sumoylation. Acts as a negative regulator of abscisic acid (ABA) signaling through ABI5 sumoylation. Mediates sumoylation of SCE1, GTE3 and GTE5. Functions as a negative regulator of SnRK1 signaling through sumoylation of several components of the SnRK1 complex. This chain is E3 SUMO-protein ligase SIZ1, found in Arabidopsis thaliana (Mouse-ear cress).